The chain runs to 151 residues: FAD synthase (151 aa).

ATP contacts are provided by residues Thr21 to Phe22, His26 to His29, and Asp104.

Belongs to the archaeal FAD synthase family. Homodimer. It depends on a divalent metal cation as a cofactor.

The catalysed reaction is FMN + ATP + H(+) = FAD + diphosphate. It functions in the pathway cofactor biosynthesis; FAD biosynthesis; FAD from FMN: step 1/1. Functionally, catalyzes the transfer of the AMP portion of ATP to flavin mononucleotide (FMN) to produce flavin adenine dinucleotide (FAD) coenzyme. This Methanosarcina acetivorans (strain ATCC 35395 / DSM 2834 / JCM 12185 / C2A) protein is FAD synthase.